The chain runs to 131 residues: Fumarate reductase subunit C (131 aa).

The next 3 membrane-spanning stretches (helical) occupy residues glutamate 30–leucine 50, phenylalanine 63–histidine 83, and isoleucine 109–leucine 129.

Belongs to the FrdC family. Part of an enzyme complex containing four subunits: a flavoprotein (FrdA), an iron-sulfur protein (FrdB), and two hydrophobic anchor proteins (FrdC and FrdD).

It localises to the cell inner membrane. Two distinct, membrane-bound, FAD-containing enzymes are responsible for the catalysis of fumarate and succinate interconversion; fumarate reductase is used in anaerobic growth, and succinate dehydrogenase is used in aerobic growth. Anchors the catalytic components of the fumarate reductase complex to the cell inner membrane, binds quinones. This is Fumarate reductase subunit C from Shigella boydii serotype 4 (strain Sb227).